We begin with the raw amino-acid sequence, 450 residues long: Bifunctional protein GlmU (450 aa).

Positions 1-229 (MRRHAIILAA…VEEIMGVNDR (229 aa)) are pyrophosphorylase. Residues 8–11 (LAAG), Lys22, Gln72, and 77–78 (GT) each bind UDP-N-acetyl-alpha-D-glucosamine. Asp102 provides a ligand contact to Mg(2+). Positions 139, 154, and 227 each coordinate UDP-N-acetyl-alpha-D-glucosamine. Asn227 provides a ligand contact to Mg(2+). The interval 230-250 (VMLSQAEKAMQRRTNHYHMLN) is linker. Positions 251–450 (GVTIIDPDST…RQTTKEGYRK (200 aa)) are N-acetyltransferase. UDP-N-acetyl-alpha-D-glucosamine-binding residues include Arg332 and Lys350. The active-site Proton acceptor is His362. UDP-N-acetyl-alpha-D-glucosamine is bound by residues Tyr365 and Asn376. Residues 385–386 (NY), Ala422, and Arg439 contribute to the acetyl-CoA site.

In the N-terminal section; belongs to the N-acetylglucosamine-1-phosphate uridyltransferase family. This sequence in the C-terminal section; belongs to the transferase hexapeptide repeat family. Homotrimer. It depends on Mg(2+) as a cofactor.

It localises to the cytoplasm. It catalyses the reaction alpha-D-glucosamine 1-phosphate + acetyl-CoA = N-acetyl-alpha-D-glucosamine 1-phosphate + CoA + H(+). The catalysed reaction is N-acetyl-alpha-D-glucosamine 1-phosphate + UTP + H(+) = UDP-N-acetyl-alpha-D-glucosamine + diphosphate. It functions in the pathway nucleotide-sugar biosynthesis; UDP-N-acetyl-alpha-D-glucosamine biosynthesis; N-acetyl-alpha-D-glucosamine 1-phosphate from alpha-D-glucosamine 6-phosphate (route II): step 2/2. Its pathway is nucleotide-sugar biosynthesis; UDP-N-acetyl-alpha-D-glucosamine biosynthesis; UDP-N-acetyl-alpha-D-glucosamine from N-acetyl-alpha-D-glucosamine 1-phosphate: step 1/1. The protein operates within bacterial outer membrane biogenesis; LPS lipid A biosynthesis. Catalyzes the last two sequential reactions in the de novo biosynthetic pathway for UDP-N-acetylglucosamine (UDP-GlcNAc). The C-terminal domain catalyzes the transfer of acetyl group from acetyl coenzyme A to glucosamine-1-phosphate (GlcN-1-P) to produce N-acetylglucosamine-1-phosphate (GlcNAc-1-P), which is converted into UDP-GlcNAc by the transfer of uridine 5-monophosphate (from uridine 5-triphosphate), a reaction catalyzed by the N-terminal domain. The polypeptide is Bifunctional protein GlmU (Staphylococcus aureus (strain USA300)).